The sequence spans 264 residues: uncharacterized protein (264 aa).

6 helical membrane-spanning segments follow: residues 1 to 21 (MLLGLGIVVLIYSLIALSVSL), 43 to 63 (FFGVLNLLIALGVAGIINGFV), 95 to 115 (VVGLIHAGILMVLTTVALSSL), 146 to 166 (IATWTSVGIFWFLGLVLLGGL), 181 to 201 (GWLAVVVIGLTTLVVMVQPFV), and 215 to 235 (IVANTILIAILVIIVLVMFFP).

This sequence to M.pneumoniae MPN_308 C-terminal region.

The protein localises to the cell membrane. This is an uncharacterized protein from Mycoplasma pneumoniae (strain ATCC 29342 / M129 / Subtype 1) (Mycoplasmoides pneumoniae).